A 316-amino-acid polypeptide reads, in one-letter code: Olfactory receptor 2T11 (316 aa).

Topologically, residues Met1–Gly22 are extracellular. N-linked (GlcNAc...) asparagine glycosylation occurs at Asn3. A helical transmembrane segment spans residues Ile23–Ile46. Residues Gln47–Thr54 are Cytoplasmic-facing. A helical transmembrane segment spans residues Pro55 to Pro76. The Extracellular segment spans residues Lys77 to Gln97. Cys94 and Cys186 are disulfide-bonded. The chain crosses the membrane as a helical span at residues Ile98–Tyr117. The Cytoplasmic portion of the chain corresponds to Asp118–Lys136. Residues Lys137–Leu155 traverse the membrane as a helical segment. Residues Leu156–Tyr192 are Extracellular-facing. The chain crosses the membrane as a helical span at residues Glu193 to Ser216. At Leu217–Lys233 the chain is on the cytoplasmic side. The helical transmembrane segment at Ala234–Tyr256 threads the bilayer. Residues Val257–Lys269 are Extracellular-facing. Residues Val270–Leu289 form a helical membrane-spanning segment. The Cytoplasmic portion of the chain corresponds to Arg290–Ala316.

This sequence belongs to the G-protein coupled receptor 1 family.

It localises to the cell membrane. In terms of biological role, odorant receptor. The protein is Olfactory receptor 2T11 (OR2T11) of Homo sapiens (Human).